The chain runs to 222 residues: UPF0758 protein YicR (222 aa).

In terms of domain architecture, MPN spans proline 100–isoleucine 222. Histidine 171, histidine 173, and aspartate 184 together coordinate Zn(2+). The JAMM motif signature appears at histidine 171–aspartate 184.

Belongs to the UPF0758 family. YicR subfamily.

This chain is UPF0758 protein YicR, found in Escherichia coli O81 (strain ED1a).